The chain runs to 520 residues: Glucose-1-phosphate adenylyltransferase small subunit, chloroplastic (520 aa).

Residues 1 to 71 constitute a chloroplast transit peptide; sequence MASVSAIGVL…RNPIIVSPKA (71 aa).

The protein belongs to the bacterial/plant glucose-1-phosphate adenylyltransferase family. In terms of assembly, heterotetramer. Leaves.

It localises to the plastid. Its subcellular location is the chloroplast. It catalyses the reaction alpha-D-glucose 1-phosphate + ATP + H(+) = ADP-alpha-D-glucose + diphosphate. It functions in the pathway glycan biosynthesis; starch biosynthesis. Activated by 3'phosphoglycerate, inhibited by orthophosphate. Allosteric regulation. Its function is as follows. This protein plays a role in synthesis of starch. It catalyzes the synthesis of the activated glycosyl donor, ADP-glucose from Glc-1-P and ATP. This Arabidopsis thaliana (Mouse-ear cress) protein is Glucose-1-phosphate adenylyltransferase small subunit, chloroplastic (APS1).